The primary structure comprises 346 residues: UDP-3-O-acylglucosamine N-acyltransferase (346 aa).

H240 acts as the Proton acceptor in catalysis.

It belongs to the transferase hexapeptide repeat family. LpxD subfamily. In terms of assembly, homotrimer.

It catalyses the reaction a UDP-3-O-[(3R)-3-hydroxyacyl]-alpha-D-glucosamine + a (3R)-hydroxyacyl-[ACP] = a UDP-2-N,3-O-bis[(3R)-3-hydroxyacyl]-alpha-D-glucosamine + holo-[ACP] + H(+). It participates in bacterial outer membrane biogenesis; LPS lipid A biosynthesis. Its function is as follows. Catalyzes the N-acylation of UDP-3-O-acylglucosamine using 3-hydroxyacyl-ACP as the acyl donor. Is involved in the biosynthesis of lipid A, a phosphorylated glycolipid that anchors the lipopolysaccharide to the outer membrane of the cell. This is UDP-3-O-acylglucosamine N-acyltransferase from Phocaeicola vulgatus (strain ATCC 8482 / DSM 1447 / JCM 5826 / CCUG 4940 / NBRC 14291 / NCTC 11154) (Bacteroides vulgatus).